The chain runs to 238 residues: Small ribosomal subunit protein uS2 (238 aa).

This sequence belongs to the universal ribosomal protein uS2 family.

In Synechococcus sp. (strain CC9605), this protein is Small ribosomal subunit protein uS2.